Consider the following 86-residue polypeptide: DNA-directed RNA polymerase subunit Rpo11 (86 aa).

The protein belongs to the archaeal Rpo11/eukaryotic RPB11/RPC19 RNA polymerase subunit family. As to quaternary structure, part of the RNA polymerase complex.

Its subcellular location is the cytoplasm. The catalysed reaction is RNA(n) + a ribonucleoside 5'-triphosphate = RNA(n+1) + diphosphate. Its function is as follows. DNA-dependent RNA polymerase (RNAP) catalyzes the transcription of DNA into RNA using the four ribonucleoside triphosphates as substrates. This chain is DNA-directed RNA polymerase subunit Rpo11, found in Archaeoglobus fulgidus (strain ATCC 49558 / DSM 4304 / JCM 9628 / NBRC 100126 / VC-16).